We begin with the raw amino-acid sequence, 940 residues long: Lon protease homolog 1, mitochondrial (940 aa).

A mitochondrion-targeting transit peptide spans 1–61; it reads MLKLFTSSAS…AFFCSEPTNG (61 aa). The disordered stretch occupies residues 70-90; it reads KAVESDSEVSDSKSSSAIVPT. Residue Ser-74 is modified to Phosphoserine. In terms of domain architecture, Lon N-terminal spans 100-309; it reads VLALPVPHRP…LTLELMKKEM (210 aa). An ATP-binding site is contributed by 464 to 471; that stretch reads GPPGVGKT. Positions 751–935 constitute a Lon proteolytic domain; the sequence is QTPVGVVMGL…GKIFELAFGY (185 aa). Active-site residues include Ser-841 and Lys-884.

It belongs to the peptidase S16 family. In terms of assembly, homohexamer or homoheptamer. Organized in a ring with a central cavity.

The protein localises to the mitochondrion matrix. It catalyses the reaction Hydrolysis of proteins in presence of ATP.. In terms of biological role, ATP-dependent serine protease that mediates the selective degradation of misfolded, unassembled or oxidatively damaged polypeptides as well as certain short-lived regulatory proteins in the mitochondrial matrix. May also have a chaperone function in the assembly of inner membrane protein complexes. Participates in the regulation of mitochondrial gene expression and in the maintenance of the integrity of the mitochondrial genome. Binds to mitochondrial DNA in a site-specific manner. The chain is Lon protease homolog 1, mitochondrial (LON1) from Arabidopsis thaliana (Mouse-ear cress).